We begin with the raw amino-acid sequence, 466 residues long: Myocardial zonula adherens protein (466 aa).

Residues 1–10 are compositionally biased toward polar residues; it reads MLRSTSTVTL. An N-terminal signal peptide occupies residues 1–20; sequence MLRSTSTVTLLSGGAARTPG. Residues 1 to 23 form a disordered region; the sequence is MLRSTSTVTLLSGGAARTPGAPS. Coiled-coil stretches lie at residues 96 to 142 and 174 to 418; these read QLKE…SHAQ and LQKT…TQAK. The Required for DYNLL1-binding signature appears at 424-425; the sequence is RE.

Belongs to the MYZAP family. As to quaternary structure, interacts with DSP, MPRIP and TJP1/ZO1. Interaction with MPRIP inhibits the activation of transcription factor SRF. Interacts with GRIN1. Interacts with DYNLL1. As to expression, detected in heart, liver, skeletal muscle, placenta, small intestine, lung, prostate and testis. Expressed in arrector pili muscle (at protein level).

The protein localises to the cytoplasm. It is found in the cytoskeleton. It localises to the cell membrane. Its subcellular location is the myofibril. The protein resides in the sarcomere. The protein localises to the i band. It is found in the z line. It localises to the cell junction. Functionally, plays a role in cellular signaling via Rho-related GTP-binding proteins and subsequent activation of transcription factor SRF. Targets TJP1 to cell junctions. In cortical neurons, may play a role in glutaminergic signal transduction through interaction with the NMDA receptor subunit GRIN1. In Homo sapiens (Human), this protein is Myocardial zonula adherens protein (MYZAP).